A 519-amino-acid chain; its full sequence is Putative cytochrome P450 CYP13A10 (519 aa).

A helical transmembrane segment spans residues 3–23 (VILLAIPTLFIGFISYYLWIW). Cys465 is a binding site for heme.

This sequence belongs to the cytochrome P450 family. Heme is required as a cofactor.

The protein resides in the membrane. Its function is as follows. Cytochromes P450 are a group of heme-thiolate monooxygenases. They oxidize a variety of structurally unrelated compounds, including steroids, fatty acids, and xenobiotics. The chain is Putative cytochrome P450 CYP13A10 (cyp-13A10) from Caenorhabditis elegans.